Here is a 305-residue protein sequence, read N- to C-terminus: Transcription factor bHLH18 (305 aa).

A disordered region spans residues 41–67; sequence LKTTHISPNLHPFSSSNPPPPKHQPSS. The span at 44–56 shows a compositional bias: polar residues; the sequence is THISPNLHPFSSS. In terms of domain architecture, bHLH spans 122-171; it reads SNAQDHILAERKRREKLTQRFVALSALIPGLKKMDKASVLGDAIKHIKYL. The tract at residues 201–224 is disordered; sequence DENHQPSSSSSSDGNRNSSSSNLP. A compositionally biased stretch (low complexity) spans 207-222; sequence SSSSSSDGNRNSSSSN.

As to quaternary structure, homodimer. As to expression, expressed in roots.

Its subcellular location is the nucleus. The chain is Transcription factor bHLH18 (BHLH18) from Arabidopsis thaliana (Mouse-ear cress).